The primary structure comprises 310 residues: MAQNSTQLEKISGSFTRLAEAFQLALTACREIEESLPSILGEKSEVSKPFKPAVTDPSNAKKEINMAIESPSKKATSPKKATPAAVAPVEATSAVDTSEAVASMTPNKRKARDPAQPKRPPSAYNLFQKNQRSEIKESLGEKSNDVKEVNKAMHEKWGSLSEDDRKTYEEEASKLREAYEEEMAAYNASKENASVADSRVTAEETSTKPSEDLSSPTKKDLIDFSETRPLAQASRATPDIKEQHAKKPKRKHTRSTVPTSNVEPVSQPQPSPDKIVSSPNPPSAKREKKKRRKSSMSSSITTPPTAKVAN.

A compositionally biased stretch (low complexity) spans glutamate 69–valine 95. Residues glutamate 69–asparagine 310 form a disordered region. Serine 70 bears the Phosphoserine mark. Threonine 105 carries the post-translational modification Phosphothreonine. Positions proline 117–asparagine 187 form a DNA-binding region, HMG box. Basic and acidic residues-rich tracts occupy residues glutamine 131 to alanine 178 and valine 200 to glutamate 226. Serine 161, serine 214, and serine 215 each carry phosphoserine. 2 positions are modified to phosphothreonine: threonine 217 and threonine 237. The segment covering serine 255–proline 268 has biased composition (polar residues). 5 positions are modified to phosphoserine: serine 271, serine 278, serine 294, serine 295, and serine 297. Threonine 302 and threonine 305 each carry phosphothreonine.

Its subcellular location is the cytoplasm. This Schizosaccharomyces pombe (strain 972 / ATCC 24843) (Fission yeast) protein is HMG box-containing protein C28F2.11.